A 247-amino-acid chain; its full sequence is uncharacterized protein (247 aa).

Residues 11–85 (GMSIGAVLDL…LKVIRAQLDA (75 aa)) form the HTH merR-type domain. Residues 14 to 38 (IGAVLDLLRPDFPDVTISKIRFLEA) constitute a DNA-binding region (H-T-H motif).

In terms of assembly, homodimer.

Transcriptional regulator that binds to its own promoter and thus may play a role in the regulation of the cotranscribed genes Rv1827 and Rv1828. Can also bind several promoter regions of genes that are essential, including ftsZ. Binds to the imperfect everted repeat sequence CTCAA through its winged-HTH motif. This is an uncharacterized protein from Mycobacterium tuberculosis (strain ATCC 25618 / H37Rv).